The chain runs to 204 residues: Large ribosomal subunit protein bL25 (204 aa).

Positions 1–23 are disordered; it reads MSETLHLSAETRDRAGKGASRAL.

This sequence belongs to the bacterial ribosomal protein bL25 family. CTC subfamily. As to quaternary structure, part of the 50S ribosomal subunit; part of the 5S rRNA/L5/L18/L25 subcomplex. Contacts the 5S rRNA. Binds to the 5S rRNA independently of L5 and L18.

This is one of the proteins that binds to the 5S RNA in the ribosome where it forms part of the central protuberance. This Novosphingobium aromaticivorans (strain ATCC 700278 / DSM 12444 / CCUG 56034 / CIP 105152 / NBRC 16084 / F199) protein is Large ribosomal subunit protein bL25.